Consider the following 390-residue polypeptide: ATP phosphoribosyltransferase regulatory subunit (390 aa).

The protein belongs to the class-II aminoacyl-tRNA synthetase family. HisZ subfamily. In terms of assembly, heteromultimer composed of HisG and HisZ subunits.

It localises to the cytoplasm. It participates in amino-acid biosynthesis; L-histidine biosynthesis; L-histidine from 5-phospho-alpha-D-ribose 1-diphosphate: step 1/9. Its function is as follows. Required for the first step of histidine biosynthesis. May allow the feedback regulation of ATP phosphoribosyltransferase activity by histidine. This chain is ATP phosphoribosyltransferase regulatory subunit, found in Bacillus velezensis (strain DSM 23117 / BGSC 10A6 / LMG 26770 / FZB42) (Bacillus amyloliquefaciens subsp. plantarum).